Consider the following 89-residue polypeptide: Small ribosomal subunit protein uS15 (89 aa).

This sequence belongs to the universal ribosomal protein uS15 family. As to quaternary structure, part of the 30S ribosomal subunit. Forms a bridge to the 50S subunit in the 70S ribosome, contacting the 23S rRNA.

Functionally, one of the primary rRNA binding proteins, it binds directly to 16S rRNA where it helps nucleate assembly of the platform of the 30S subunit by binding and bridging several RNA helices of the 16S rRNA. Forms an intersubunit bridge (bridge B4) with the 23S rRNA of the 50S subunit in the ribosome. The sequence is that of Small ribosomal subunit protein uS15 from Aeromonas hydrophila subsp. hydrophila (strain ATCC 7966 / DSM 30187 / BCRC 13018 / CCUG 14551 / JCM 1027 / KCTC 2358 / NCIMB 9240 / NCTC 8049).